Here is a 257-residue protein sequence, read N- to C-terminus: Leucine-rich repeat-containing protein 3 (257 aa).

The N-terminal stretch at 1–32 is a signal peptide; it reads MGTVRPPRPSLLLVSTRESCLFLLFCLHLGAA. The LRRNT domain maps to 33 to 64; it reads CPQPCRCPDHAGAVAVFCSLRGLQEVPEDIPA. 4 LRR repeats span residues 65 to 86, 89 to 110, 114 to 135, and 136 to 157; these read NTVL…AFQH, RLRE…TFAG, GLRL…ALGK, and LSAK…QEAL. A helical transmembrane segment spans residues 205–225; that stretch reads VAMLVTMFGWFAMVIAYVVYY.

The protein belongs to the LRRC3 family. As to expression, widely expressed; detected in testis, lung, small intestine, breast, brain, heart, bone marrow, placenta, colon, fetal brain, liver, fetal liver, thymus, salivary gland, spinal cord, spleen, trachea and adrenal gland.

It is found in the membrane. This Homo sapiens (Human) protein is Leucine-rich repeat-containing protein 3 (LRRC3).